The chain runs to 483 residues: Cysteine--tRNA ligase (483 aa).

A Zn(2+)-binding site is contributed by Cys29. The short motif at 31 to 41 (ITVYDYCHLGH) is the 'HIGH' region element. Zn(2+)-binding residues include Cys215, His240, and Glu244. Positions 272–276 (KMSKS) match the 'KMSKS' region motif. Lys275 provides a ligand contact to ATP.

It belongs to the class-I aminoacyl-tRNA synthetase family. As to quaternary structure, monomer. Zn(2+) serves as cofactor.

It is found in the cytoplasm. The catalysed reaction is tRNA(Cys) + L-cysteine + ATP = L-cysteinyl-tRNA(Cys) + AMP + diphosphate. In Synechocystis sp. (strain ATCC 27184 / PCC 6803 / Kazusa), this protein is Cysteine--tRNA ligase (cysS).